The primary structure comprises 277 residues: Peptide deformylase 1A, chloroplastic (277 aa).

Zn(2+)-binding residues include Cys196 and His238. Glu239 is an active-site residue. His242 is a Zn(2+) binding site.

Belongs to the polypeptide deformylase family. Zn(2+) serves as cofactor.

The protein resides in the plastid. Its subcellular location is the chloroplast stroma. The catalysed reaction is N-terminal N-formyl-L-methionyl-[peptide] + H2O = N-terminal L-methionyl-[peptide] + formate. Its function is as follows. Removes the formyl group from the N-terminal Met of newly synthesized proteins. This Solanum lycopersicum (Tomato) protein is Peptide deformylase 1A, chloroplastic (PDF1A).